Here is a 525-residue protein sequence, read N- to C-terminus: Lysine--tRNA ligase (525 aa).

Mg(2+) is bound by residues E419 and E426.

This sequence belongs to the class-II aminoacyl-tRNA synthetase family. Homodimer. Mg(2+) is required as a cofactor.

It localises to the cytoplasm. It carries out the reaction tRNA(Lys) + L-lysine + ATP = L-lysyl-tRNA(Lys) + AMP + diphosphate. The sequence is that of Lysine--tRNA ligase (lysS) from Deinococcus radiodurans (strain ATCC 13939 / DSM 20539 / JCM 16871 / CCUG 27074 / LMG 4051 / NBRC 15346 / NCIMB 9279 / VKM B-1422 / R1).